We begin with the raw amino-acid sequence, 422 residues long: Serpin A11 (422 aa).

The signal sequence occupies residues 1 to 24 (MGPVWLWLLIAELLLPVHYQPSSA). The tract at residues 25-45 (HGDKSLGAPQPASHQSLEPAP) is disordered. 4 N-linked (GlcNAc...) asparagine glycosylation sites follow: N106, N169, N350, and N385.

The protein belongs to the serpin family.

The protein resides in the secreted. The sequence is that of Serpin A11 (Serpina11) from Rattus norvegicus (Rat).